A 208-amino-acid polypeptide reads, in one-letter code: FMN-dependent NADH:quinone oxidoreductase (208 aa).

FMN is bound by residues 17–19 (SNS), 99–102 (MWNL), and 143–146 (SRGG).

This sequence belongs to the azoreductase type 1 family. As to quaternary structure, homodimer. Requires FMN as cofactor.

It carries out the reaction 2 a quinone + NADH + H(+) = 2 a 1,4-benzosemiquinone + NAD(+). It catalyses the reaction N,N-dimethyl-1,4-phenylenediamine + anthranilate + 2 NAD(+) = 2-(4-dimethylaminophenyl)diazenylbenzoate + 2 NADH + 2 H(+). Quinone reductase that provides resistance to thiol-specific stress caused by electrophilic quinones. Functionally, also exhibits azoreductase activity. Catalyzes the reductive cleavage of the azo bond in aromatic azo compounds to the corresponding amines. This is FMN-dependent NADH:quinone oxidoreductase from Staphylococcus carnosus (strain TM300).